A 729-amino-acid chain; its full sequence is Catalase-peroxidase (729 aa).

The segment at 1–33 (MSAHNTNESAVGKCPFHEQKEEKSVLARGAGGG) is disordered. Over residues 15 to 25 (PFHEQKEEKSV) the composition is skewed to basic and acidic residues. A cross-link (tryptophyl-tyrosyl-methioninium (Trp-Tyr) (with M-255)) is located at residues 108-229 (WHSAGTYRTV…LGATEMGLIY (122 aa)). Histidine 109 acts as the Proton acceptor in catalysis. Positions 229-255 (YVNPEGPEASGNPASAAPAIRATFGNM) form a cross-link, tryptophyl-tyrosyl-methioninium (Tyr-Met) (with W-108). Histidine 270 serves as a coordination point for heme b.

This sequence belongs to the peroxidase family. Peroxidase/catalase subfamily. In terms of assembly, homodimer or homotetramer. It depends on heme b as a cofactor. In terms of processing, formation of the three residue Trp-Tyr-Met cross-link is important for the catalase, but not the peroxidase activity of the enzyme.

It carries out the reaction H2O2 + AH2 = A + 2 H2O. The catalysed reaction is 2 H2O2 = O2 + 2 H2O. Functionally, bifunctional enzyme with both catalase and broad-spectrum peroxidase activity. The protein is Catalase-peroxidase of Erwinia tasmaniensis (strain DSM 17950 / CFBP 7177 / CIP 109463 / NCPPB 4357 / Et1/99).